A 180-amino-acid chain; its full sequence is Large ribosomal subunit protein uL5 (180 aa).

This sequence belongs to the universal ribosomal protein uL5 family. Part of the 50S ribosomal subunit; part of the 5S rRNA/L5/L18/L25 subcomplex. Contacts the 5S rRNA and the P site tRNA. Forms a bridge to the 30S subunit in the 70S ribosome.

In terms of biological role, this is one of the proteins that bind and probably mediate the attachment of the 5S RNA into the large ribosomal subunit, where it forms part of the central protuberance. In the 70S ribosome it contacts protein S13 of the 30S subunit (bridge B1b), connecting the 2 subunits; this bridge is implicated in subunit movement. Contacts the P site tRNA; the 5S rRNA and some of its associated proteins might help stabilize positioning of ribosome-bound tRNAs. The sequence is that of Large ribosomal subunit protein uL5 from Xanthomonas campestris pv. campestris (strain 8004).